A 102-amino-acid polypeptide reads, in one-letter code: NADH-quinone oxidoreductase subunit K 1 (102 aa).

Helical transmembrane passes span 5–25, 31–51, and 65–85; these read ISHY…GIFL, IIIL…MVAF, and LFIL…LVVF.

This sequence belongs to the complex I subunit 4L family. In terms of assembly, NDH-1 is composed of 14 different subunits. Subunits NuoA, H, J, K, L, M, N constitute the membrane sector of the complex.

The protein localises to the cell inner membrane. It carries out the reaction a quinone + NADH + 5 H(+)(in) = a quinol + NAD(+) + 4 H(+)(out). Functionally, NDH-1 shuttles electrons from NADH, via FMN and iron-sulfur (Fe-S) centers, to quinones in the respiratory chain. The immediate electron acceptor for the enzyme in this species is believed to be ubiquinone. Couples the redox reaction to proton translocation (for every two electrons transferred, four hydrogen ions are translocated across the cytoplasmic membrane), and thus conserves the redox energy in a proton gradient. This chain is NADH-quinone oxidoreductase subunit K 1, found in Rhizobium meliloti (strain 1021) (Ensifer meliloti).